The sequence spans 417 residues: Serine hydroxymethyltransferase (417 aa).

(6S)-5,6,7,8-tetrahydrofolate contacts are provided by residues leucine 121 and 125-127 (GHL). An N6-(pyridoxal phosphate)lysine modification is found at lysine 229. 355–357 (SPF) lines the (6S)-5,6,7,8-tetrahydrofolate pocket.

The protein belongs to the SHMT family. Homodimer. It depends on pyridoxal 5'-phosphate as a cofactor.

It is found in the cytoplasm. It catalyses the reaction (6R)-5,10-methylene-5,6,7,8-tetrahydrofolate + glycine + H2O = (6S)-5,6,7,8-tetrahydrofolate + L-serine. It participates in one-carbon metabolism; tetrahydrofolate interconversion. The protein operates within amino-acid biosynthesis; glycine biosynthesis; glycine from L-serine: step 1/1. Its function is as follows. Catalyzes the reversible interconversion of serine and glycine with tetrahydrofolate (THF) serving as the one-carbon carrier. This reaction serves as the major source of one-carbon groups required for the biosynthesis of purines, thymidylate, methionine, and other important biomolecules. Also exhibits THF-independent aldolase activity toward beta-hydroxyamino acids, producing glycine and aldehydes, via a retro-aldol mechanism. The sequence is that of Serine hydroxymethyltransferase from Shewanella baltica (strain OS195).